The sequence spans 483 residues: Acetyl-coenzyme A carboxylase carboxyl transferase subunit beta, chloroplastic (483 aa).

Residues L221–P483 enclose the CoA carboxyltransferase N-terminal domain. Zn(2+) contacts are provided by C225, C228, C244, and C247. Residues C225–C247 form a C4-type zinc finger.

It belongs to the AccD/PCCB family. In terms of assembly, acetyl-CoA carboxylase is a heterohexamer composed of biotin carboxyl carrier protein, biotin carboxylase and 2 subunits each of ACCase subunit alpha and ACCase plastid-coded subunit beta (accD). Requires Zn(2+) as cofactor.

It localises to the plastid. The protein localises to the chloroplast stroma. The enzyme catalyses N(6)-carboxybiotinyl-L-lysyl-[protein] + acetyl-CoA = N(6)-biotinyl-L-lysyl-[protein] + malonyl-CoA. It functions in the pathway lipid metabolism; malonyl-CoA biosynthesis; malonyl-CoA from acetyl-CoA: step 1/1. Component of the acetyl coenzyme A carboxylase (ACC) complex. Biotin carboxylase (BC) catalyzes the carboxylation of biotin on its carrier protein (BCCP) and then the CO(2) group is transferred by the transcarboxylase to acetyl-CoA to form malonyl-CoA. The sequence is that of Acetyl-coenzyme A carboxylase carboxyl transferase subunit beta, chloroplastic from Nuphar advena (Common spatterdock).